A 185-amino-acid chain; its full sequence is Ribosome-recycling factor (185 aa).

This sequence belongs to the RRF family.

The protein resides in the cytoplasm. In terms of biological role, responsible for the release of ribosomes from messenger RNA at the termination of protein biosynthesis. May increase the efficiency of translation by recycling ribosomes from one round of translation to another. The sequence is that of Ribosome-recycling factor from Francisella tularensis subsp. holarctica (strain FTNF002-00 / FTA).